Here is a 31-residue protein sequence, read N- to C-terminus: Cytochrome b6-f complex subunit 6 (31 aa).

The helical transmembrane segment at 4–24 (ITSYFGFLLAALTITSALLIG) threads the bilayer.

The protein belongs to the PetL family. As to quaternary structure, the 4 large subunits of the cytochrome b6-f complex are cytochrome b6, subunit IV (17 kDa polypeptide, PetD), cytochrome f and the Rieske protein, while the 4 small subunits are PetG, PetL, PetM and PetN. The complex functions as a dimer.

Its subcellular location is the plastid. The protein localises to the chloroplast thylakoid membrane. Functionally, component of the cytochrome b6-f complex, which mediates electron transfer between photosystem II (PSII) and photosystem I (PSI), cyclic electron flow around PSI, and state transitions. PetL is important for photoautotrophic growth as well as for electron transfer efficiency and stability of the cytochrome b6-f complex. The polypeptide is Cytochrome b6-f complex subunit 6 (Piper cenocladum (Ant piper)).